The following is a 561-amino-acid chain: uncharacterized protein (561 aa).

The segment covering 314-323 has biased composition (low complexity); it reads ANNGSGDSSS. Positions 314-366 are disordered; sequence ANNGSGDSSSTALNNESPNTTPKSRTFFSPKGHRRNSSHVSSLTSRSTKKPIT. The segment covering 324–340 has biased composition (polar residues); it reads TALNNESPNTTPKSRTF. A Phosphoserine modification is found at S514.

Its subcellular location is the cytoplasm. This is an uncharacterized protein from Saccharomyces cerevisiae (strain ATCC 204508 / S288c) (Baker's yeast).